The following is a 205-amino-acid chain: Guanylate kinase (205 aa).

The region spanning 18–196 (PKLFIISAPA…AYQVLRSIFI (179 aa)) is the Guanylate kinase-like domain. 25-32 (APAGAGKT) serves as a coordination point for ATP.

The protein belongs to the guanylate kinase family.

It localises to the cytoplasm. The catalysed reaction is GMP + ATP = GDP + ADP. Functionally, essential for recycling GMP and indirectly, cGMP. The chain is Guanylate kinase (gmk) from Chlamydia trachomatis serovar D (strain ATCC VR-885 / DSM 19411 / UW-3/Cx).